The following is a 131-amino-acid chain: Small ribosomal subunit protein uS8 (131 aa).

The protein belongs to the universal ribosomal protein uS8 family. In terms of assembly, part of the 30S ribosomal subunit. Contacts proteins S5 and S12.

In terms of biological role, one of the primary rRNA binding proteins, it binds directly to 16S rRNA central domain where it helps coordinate assembly of the platform of the 30S subunit. The sequence is that of Small ribosomal subunit protein uS8 from Dehalococcoides mccartyi (strain CBDB1).